Reading from the N-terminus, the 230-residue chain is Large ribosomal subunit protein uL1 (230 aa).

This sequence belongs to the universal ribosomal protein uL1 family. Part of the 50S ribosomal subunit.

In terms of biological role, binds directly to 23S rRNA. The L1 stalk is quite mobile in the ribosome, and is involved in E site tRNA release. Its function is as follows. Protein L1 is also a translational repressor protein, it controls the translation of the L11 operon by binding to its mRNA. The protein is Large ribosomal subunit protein uL1 of Limosilactobacillus reuteri subsp. reuteri (strain JCM 1112) (Lactobacillus reuteri).